The following is a 367-amino-acid chain: Alanine racemase (367 aa).

Lys40 (proton acceptor; specific for D-alanine) is an active-site residue. Residue Lys40 is modified to N6-(pyridoxal phosphate)lysine. Arg136 serves as a coordination point for substrate. Tyr263 (proton acceptor; specific for L-alanine) is an active-site residue. Residue Met310 participates in substrate binding.

The protein belongs to the alanine racemase family. It depends on pyridoxal 5'-phosphate as a cofactor.

It catalyses the reaction L-alanine = D-alanine. It participates in amino-acid biosynthesis; D-alanine biosynthesis; D-alanine from L-alanine: step 1/1. In terms of biological role, catalyzes the interconversion of L-alanine and D-alanine. May also act on other amino acids. In Streptococcus pneumoniae serotype 19F (strain G54), this protein is Alanine racemase (alr).